Here is a 328-residue protein sequence, read N- to C-terminus: uncharacterized protein (328 aa).

One can recognise an SIS domain in the interval 37–179 (LTEKLLCHQG…AMTLLRCRKI (143 aa)). 52-57 (GIGKSG) is an ATP binding site. 2 consecutive CBS domains span residues 207–264 (PRTE…GGDI) and 273–328 (MTRN…AGLL).

Belongs to the SIS family. GutQ/KpsF subfamily.

This is an uncharacterized protein from Chlamydia trachomatis serovar D (strain ATCC VR-885 / DSM 19411 / UW-3/Cx).